An 851-amino-acid polypeptide reads, in one-letter code: Probable alpha,alpha-trehalose-phosphate synthase [UDP-forming] 7 (851 aa).

Residue serine 5 is modified to Phosphoserine. Threonine 32 bears the Phosphothreonine mark. The glycosyltransferase stretch occupies residues 59-540 (DRMIIVANRL…SRSFLQDLER (482 aa)).

This sequence in the N-terminal section; belongs to the glycosyltransferase 20 family. It in the C-terminal section; belongs to the trehalose phosphatase family. Binds to the phosphopeptide-binding site of GRF/14-3-3. In terms of processing, phosphorylated. As to expression, expressed in seedlings, leaves, roots, stems, flowers and siliques.

It catalyses the reaction D-glucose 6-phosphate + UDP-alpha-D-glucose = alpha,alpha-trehalose 6-phosphate + UDP + H(+). The sequence is that of Probable alpha,alpha-trehalose-phosphate synthase [UDP-forming] 7 (TPS7) from Arabidopsis thaliana (Mouse-ear cress).